Reading from the N-terminus, the 375-residue chain is MQKLQLCVYIYLFMLIVAGPVDLNENSEQKENVEKEGLCNACTWRQNTKSSRIEAIKIQILSKLRLETAPNISKDVIRQLLPKAPPLRELIDQYDVQRDDSSDGSLEDDDYHATTETIITMPTESDFLMQVDGKPKCCFFKFSSKIQYNKVVKAQLWIYLRPVETPTTVFVQILRLIKPMKDGTRYTGIRSLKLDMNPGTGIWQSIDVKTVLQNWLKQPESNLGIEIKALDENGHDLAVTFPGPGEDGLNPFLEVKVTDTPKRSRRDFGLDCDEHSTESRCCRYPLTVDFEAFGWDWIIAPKRYKANYCSGECEFVFLQKYPHTHLVHQANPRGSAGPCCTPTKMSPINMLYFNGKEQIIYGKIPAMVVDRCGCS.

Positions 1-23 are cleaved as a signal peptide; the sequence is MQKLQLCVYIYLFMLIVAGPVDL. Residues 24–266 constitute a propeptide that is removed on maturation; it reads NENSEQKENV…VTDTPKRSRR (243 aa). Residue asparagine 71 is glycosylated (N-linked (GlcNAc...) asparagine). 4 cysteine pairs are disulfide-bonded: cysteine 272-cysteine 282, cysteine 281-cysteine 340, cysteine 309-cysteine 372, and cysteine 313-cysteine 374.

Belongs to the TGF-beta family. In terms of assembly, homodimer; disulfide-linked. Interacts with WFIKKN2, leading to inhibit its activity. Interacts with FST3. Post-translationally, synthesized as large precursor molecule that undergoes proteolytic cleavage to generate an N-terminal propeptide and a disulfide linked C-terminal dimer, which is the biologically active molecule. The circulating form consists of a latent complex of the C-terminal dimer and other proteins, including its propeptide, which maintain the C-terminal dimer in a latent, inactive state. Ligand activation requires additional cleavage of the prodomain by a tolloid-like metalloproteinase.

It is found in the secreted. Its function is as follows. Acts specifically as a negative regulator of skeletal muscle growth. The sequence is that of Growth/differentiation factor 8 (MSTN) from Homo sapiens (Human).